A 278-amino-acid polypeptide reads, in one-letter code: N-terminal Xaa-Pro-Lys N-methyltransferase 2 (278 aa).

Residues G123, R128, D145, 174-175 (LQ), Q190, and H195 contribute to the S-adenosyl-L-methionine site.

Belongs to the methyltransferase superfamily. NTM1 family.

It localises to the nucleus. It carries out the reaction N-terminal L-alanyl-L-prolyl-L-lysyl-[protein] + S-adenosyl-L-methionine = N-terminal N-methyl-L-alanyl-L-prolyl-L-lysyl-[protein] + S-adenosyl-L-homocysteine + H(+). It catalyses the reaction N-terminal L-prolyl-L-prolyl-L-lysyl-[protein] + S-adenosyl-L-methionine = N-terminal N-methyl-L-prolyl-L-prolyl-L-lysyl-[protein] + S-adenosyl-L-homocysteine + H(+). The catalysed reaction is N-terminal L-seryl-L-prolyl-L-lysyl-[protein] + S-adenosyl-L-methionine = N-terminal N-methyl-L-seryl-L-prolyl-L-lysyl-[protein] + S-adenosyl-L-homocysteine + H(+). Its function is as follows. Alpha N-methyltransferase that methylates the N-terminus of target proteins containing the N-terminal motif [Ala/Pro/Ser]-Pro-Lys when the initiator Met is cleaved. Specifically catalyzes monomethylation of exposed alpha-amino group of Ala or Ser residue in the [Ala/Ser]-Pro-Lys motif and Pro in the Pro-Pro-Lys motif. Predominantly functions as a mono-methyltransferase but is also able to di-/tri-methylate the GPKRIA peptide and di-methylate the PPKRIA peptide (in vitro). May activate NTMT1 by priming its substrates for trimethylation. The protein is N-terminal Xaa-Pro-Lys N-methyltransferase 2 (ntmt2) of Danio rerio (Zebrafish).